The chain runs to 356 residues: Protein disulfide isomerase crld-1 (356 aa).

A signal peptide spans 1–17 (MSRILLLLAVLIGATSQ). Over 18–299 (KEVTIKNEKC…DRPFMPIDQQ (282 aa)) the chain is Lumenal. A CXXC motif is present at residues 27-30 (CRTC). Residues cysteine 27 and cysteine 30 are joined by a disulfide bond. Asparagine 122 carries an N-linked (GlcNAc...) asparagine glycan. The EGF-like 1 domain maps to 150-188 (GLSEKADVCFGKGSCHGDGSREGSGKCKCETGYTGNLCR). Intrachain disulfides connect cysteine 158/cysteine 176, cysteine 178/cysteine 187, cysteine 245/cysteine 258, cysteine 251/cysteine 267, and cysteine 269/cysteine 281. One can recognise an EGF-like 2; calcium-binding domain in the interval 241 to 282 (DVNECQNESACTKEHEICVNTVGSFKCECKEGYKKDDEQNCQ). The N-linked (GlcNAc...) asparagine glycan is linked to asparagine 247. A helical transmembrane segment spans residues 300-317 (LKLIAFSSLIIIITFVVW). Topologically, residues 318 to 321 (HGSP) are cytoplasmic. A helical transmembrane segment spans residues 322 to 341 (VLYVLTGITIVALILVDLYV). The Lumenal portion of the chain corresponds to 342 to 356 (NPDTIPDEAKRFLGY).

This sequence belongs to the CRELD family. Interacts with unc-29. As to expression, isoforms a: Widely expressed in tissues including body wall muscles, neurons, pharynx, hypodermis, seam cells, intestine and gonad. Isoform b: Widely expressed in tissues including body wall muscles, neurons, pharynx, hypodermis, seam cells, intestine and gonad.

It localises to the endoplasmic reticulum membrane. The protein localises to the endoplasmic reticulum lumen. The enzyme catalyses Catalyzes the rearrangement of -S-S- bonds in proteins.. Protein disulfide isomerase which associates with the unc-29 subunit of levamisole-sensitive nicotinic acetylcholine receptors (L-nAChR) to promote L-nAChR assembly in the endoplasmic reticulum at neuromuscular junctions. Its function is as follows. Promotes L-nAChR assembly in the endoplasmic reticulum at neuromuscular junctions. In Caenorhabditis elegans, this protein is Protein disulfide isomerase crld-1.